Here is a 139-residue protein sequence, read N- to C-terminus: Large ribosomal subunit protein uL16 (139 aa).

The tract at residues Leu74 to Val94 is disordered.

This sequence belongs to the universal ribosomal protein uL16 family. Part of the 50S ribosomal subunit.

In terms of biological role, binds 23S rRNA and is also seen to make contacts with the A and possibly P site tRNAs. The protein is Large ribosomal subunit protein uL16 of Saccharopolyspora erythraea (strain ATCC 11635 / DSM 40517 / JCM 4748 / NBRC 13426 / NCIMB 8594 / NRRL 2338).